Consider the following 212-residue polypeptide: Lipid A acyltransferase PagP (212 aa).

The signal sequence occupies residues 1 to 26; the sequence is MSSTYFHSSLLAATLFSVTLTAPAFA. Residues 29–44 are compositionally biased toward low complexity; it reads NTQNTPQTITTKKPQP. Positions 29–50 are disordered; sequence NTQNTPQTITTKKPQPAENTFS. Catalysis depends on residues His84, Asp127, and Ser128.

The protein belongs to the lipid A palmitoyltransferase family. As to quaternary structure, homodimer.

It localises to the cell outer membrane. It catalyses the reaction a lipid A + a 1,2-diacyl-sn-glycero-3-phosphocholine = a hepta-acyl lipid A + a 2-acyl-sn-glycero-3-phosphocholine. It carries out the reaction a lipid IVA + a 1,2-diacyl-sn-glycero-3-phosphocholine = a lipid IVB + a 2-acyl-sn-glycero-3-phosphocholine. The enzyme catalyses a lipid IIA + a 1,2-diacyl-sn-glycero-3-phosphocholine = a lipid IIB + a 2-acyl-sn-glycero-3-phosphocholine. Its function is as follows. Transfers a fatty acid residue from the sn-1 position of a phospholipid to the N-linked hydroxyfatty acid chain on the proximal unit of lipid A or its precursors. In Proteus mirabilis (strain HI4320), this protein is Lipid A acyltransferase PagP.